A 147-amino-acid chain; its full sequence is Large ribosomal subunit protein uL15 (147 aa).

The tract at residues 1–46 (MSIRLENLSYTPGARKEKHRKGRGHAAGKGKQAGRGQSGQKKRSTV) is disordered. A compositionally biased stretch (basic residues) spans 16–28 (KEKHRKGRGHAAG).

Belongs to the universal ribosomal protein uL15 family. As to quaternary structure, part of the 50S ribosomal subunit.

In terms of biological role, binds to the 23S rRNA. The protein is Large ribosomal subunit protein uL15 of Mesomycoplasma hyopneumoniae (strain 7448) (Mycoplasma hyopneumoniae).